A 252-amino-acid chain; its full sequence is Ribosomal RNA small subunit methyltransferase NEP1 (252 aa).

S-adenosyl-L-methionine-binding positions include methionine 176, glycine 209, glycine 214, and 227 to 232; that span reads ISNYPL.

It belongs to the class IV-like SAM-binding methyltransferase superfamily. RNA methyltransferase NEP1 family. Homodimer. Part of the small subunit (SSU) processome, composed of more than 70 proteins and the RNA chaperone small nucleolar RNA (snoRNA) U3.

The protein localises to the nucleus. It is found in the nucleolus. It catalyses the reaction a pseudouridine in rRNA + S-adenosyl-L-methionine = an N(1)-methylpseudouridine in rRNA + S-adenosyl-L-homocysteine + H(+). S-adenosyl-L-methionine-dependent pseudouridine N(1)-methyltransferase that methylates a pseudouridine in 18S rRNA. Involved the biosynthesis of the hypermodified N1-methyl-N3-(3-amino-3-carboxypropyl) pseudouridine (m1acp3-Psi) conserved in eukaryotic 18S rRNA. Also has an essential role in 40S ribosomal subunit biogenesis independent on its methyltransferase activity, facilitating the incorporation of ribosomal protein S19 during the formation of pre-ribosomes. Functionally, S-adenosyl-L-methionine-dependent pseudouridine N(1)-methyltransferase that methylates pseudouridine at position in 18S rRNA. Involved the biosynthesis of the hypermodified N1-methyl-N3-(3-amino-3-carboxypropyl) pseudouridine (m1acp3-Psi) conserved in eukaryotic 18S rRNA. Is not able to methylate uridine at this position. Also has an essential role in 40S ribosomal subunit biogenesis independent on its methyltransferase activity, facilitating the incorporation of ribosomal protein S19 during the formation of pre-ribosomes. Part of the small subunit (SSU) processome, first precursor of the small eukaryotic ribosomal subunit. During the assembly of the SSU processome in the nucleolus, many ribosome biogenesis factors, an RNA chaperone and ribosomal proteins associate with the nascent pre-rRNA and work in concert to generate RNA folding, modifications, rearrangements and cleavage as well as targeted degradation of pre-ribosomal RNA by the RNA exosome. The chain is Ribosomal RNA small subunit methyltransferase NEP1 from Drosophila melanogaster (Fruit fly).